Consider the following 253-residue polypeptide: Uracil-DNA glycosylase (253 aa).

Aspartate 79 serves as the catalytic Proton acceptor.

Belongs to the uracil-DNA glycosylase (UDG) superfamily. UNG family.

It localises to the cytoplasm. The enzyme catalyses Hydrolyzes single-stranded DNA or mismatched double-stranded DNA and polynucleotides, releasing free uracil.. Functionally, excises uracil residues from the DNA which can arise as a result of misincorporation of dUMP residues by DNA polymerase or due to deamination of cytosine. This is Uracil-DNA glycosylase from Xylella fastidiosa (strain M12).